The sequence spans 174 residues: MQDRRSSYDYEGLLACGRGELFGPGNAQLPLPPMLMFDRITDINEDGGEFGKGLIRAELDVKPDLWFFGCHFKGDPVMPGCLGLDALWQMVGFFLGWTGGEGRGRALGLGELKFTGQVLPPVRKVVYNVDIKRVMRSKLVLGIADGWLSADDDIIYRAKDLKVGLFKQDAGPGA.

The active site involves histidine 71.

Belongs to the thioester dehydratase family. FabA subfamily. In terms of assembly, homodimer.

It is found in the cytoplasm. The catalysed reaction is a (3R)-hydroxyacyl-[ACP] = a (2E)-enoyl-[ACP] + H2O. It carries out the reaction (3R)-hydroxydecanoyl-[ACP] = (2E)-decenoyl-[ACP] + H2O. It catalyses the reaction (2E)-decenoyl-[ACP] = (3Z)-decenoyl-[ACP]. Its pathway is lipid metabolism; fatty acid biosynthesis. Functionally, necessary for the introduction of cis unsaturation into fatty acids. Catalyzes the dehydration of (3R)-3-hydroxydecanoyl-ACP to E-(2)-decenoyl-ACP and then its isomerization to Z-(3)-decenoyl-ACP. Can catalyze the dehydratase reaction for beta-hydroxyacyl-ACPs with saturated chain lengths up to 16:0, being most active on intermediate chain length. The sequence is that of 3-hydroxydecanoyl-[acyl-carrier-protein] dehydratase from Nitrobacter winogradskyi (strain ATCC 25391 / DSM 10237 / CIP 104748 / NCIMB 11846 / Nb-255).